The sequence spans 198 residues: ATP-dependent Clp protease proteolytic subunit 1 (198 aa).

The Nucleophile role is filled by Ser-98. His-123 is an active-site residue.

It belongs to the peptidase S14 family. In terms of assembly, fourteen ClpP subunits assemble into 2 heptameric rings which stack back to back to give a disk-like structure with a central cavity, resembling the structure of eukaryotic proteasomes.

It localises to the cytoplasm. The enzyme catalyses Hydrolysis of proteins to small peptides in the presence of ATP and magnesium. alpha-casein is the usual test substrate. In the absence of ATP, only oligopeptides shorter than five residues are hydrolyzed (such as succinyl-Leu-Tyr-|-NHMec, and Leu-Tyr-Leu-|-Tyr-Trp, in which cleavage of the -Tyr-|-Leu- and -Tyr-|-Trp bonds also occurs).. In terms of biological role, cleaves peptides in various proteins in a process that requires ATP hydrolysis. Has a chymotrypsin-like activity. Plays a major role in the degradation of misfolded proteins. ClpXP1 is involved in the complete degradation of the Site-2 clipped anti-sigma-W factor RsiW. This results in the release of SigW and the transcription activation of the genes under the control of the sigma-W factor. This Bacillus licheniformis (strain ATCC 14580 / DSM 13 / JCM 2505 / CCUG 7422 / NBRC 12200 / NCIMB 9375 / NCTC 10341 / NRRL NRS-1264 / Gibson 46) protein is ATP-dependent Clp protease proteolytic subunit 1.